The following is a 352-amino-acid chain: uncharacterized protein (352 aa).

It to Synechocystis PCC 6803 slr0039.

This is an uncharacterized protein from Archaeoglobus fulgidus (strain ATCC 49558 / DSM 4304 / JCM 9628 / NBRC 100126 / VC-16).